The sequence spans 208 residues: MMTLASLPSTAIAGLASAAPKVQPRMAANDEFAYGLPGGANILGEFDPAGFLKGKDKLEVYRLREAETTHGRVAMLASLGFVVQEKFHPLFSGDNGPAIEQIPQLPYWLWIVMTIGIGRAELFRIQKGWAKVNPETGKADSALREGYEPGDLGFDPLGLAPSDPDEFRLMQEKELSHGRLAMIAAAGFLAQEAVSGDTWGTYWGDATF.

The transit peptide at 1-31 directs the protein to the chloroplast; that stretch reads MMTLASLPSTAIAGLASAAPKVQPRMAANDE. A helical membrane pass occupies residues 102–118; that stretch reads IPQLPYWLWIVMTIGIG.

Belongs to the fucoxanthin chlorophyll protein family. As to quaternary structure, the LHC complex of chromophytic algae is composed of fucoxanthin, chlorophyll A and C bound non-covalently by fucoxanthin chlorophyll proteins (FCPs). The ratio of pigments in this LHC is; fucoxanthin: chlorophyll C: chlorophyll A; (0.6-1): (0.1-0.3): (1).

The protein resides in the plastid. The protein localises to the chloroplast thylakoid membrane. The light-harvesting complex (LHC) functions as a light receptor, it captures and delivers excitation energy to photosystems with which it is closely associated. Energy is transferred from the carotenoid and chlorophyll C (or B) to chlorophyll A and the photosynthetic reaction centers where it is used to synthesize ATP and reducing power. The protein is Fucoxanthin-chlorophyll a-c binding protein, chloroplastic (FCP) of Isochrysis galbana (Marine planktonic alga).